The chain runs to 138 residues: Putative pre-16S rRNA nuclease (138 aa).

The protein belongs to the YqgF nuclease family.

The protein resides in the cytoplasm. In terms of biological role, could be a nuclease involved in processing of the 5'-end of pre-16S rRNA. This chain is Putative pre-16S rRNA nuclease, found in Listeria innocua serovar 6a (strain ATCC BAA-680 / CLIP 11262).